A 291-amino-acid chain; its full sequence is Ajmaline N-methyltransferase (291 aa).

Residues 71 to 80 form an SAM motif I region; sequence MLDVGCGIGG. A Vacuolar targeting signal motif is present at residues 133 to 139; that stretch reads DGAFDLV. Residues 134–142 are SAM motif II; it reads GAFDLVLSI. Residues 161–170 form an SAM motif III region; the sequence is VAASGATIII.

Belongs to the class I-like SAM-binding methyltransferase superfamily. gTMT family. As to quaternary structure, homodimer. In terms of tissue distribution, mainly expressed in roots, but barely detectable in stems and flowers.

The protein localises to the vacuole membrane. The catalysed reaction is ajmaline + S-adenosyl-L-methionine = 4-methylajmaline + S-adenosyl-L-homocysteine + H(+). It catalyses the reaction norajmaline + S-adenosyl-L-methionine = 4-methylnorajmaline + S-adenosyl-L-homocysteine + H(+). The protein operates within alkaloid biosynthesis; ajmaline biosynthesis. In terms of biological role, N-methyltransferase involved in the biosynthesis of ajmaline-type monoterpenoid indole alkaloids (MIAs) natural products, important plant-derived pharmaceuticals used in the therapy of heart disorders. Catalyzes the indole N-methylation of ajmaline to produce 4-methylajmaline. Also able, with a lower efficiency, to mediates the conversion of norajmaline to 4-methylnorajmaline. The sequence is that of Ajmaline N-methyltransferase from Rauvolfia serpentina (Serpentine wood).